The primary structure comprises 293 residues: Signal recognition particle receptor FtsY (293 aa).

Residues 93 to 100, 175 to 179, and 239 to 242 contribute to the GTP site; these read GVNGAGKT, DTAGR, and TKLD.

Belongs to the GTP-binding SRP family. FtsY subfamily. As to quaternary structure, part of the signal recognition particle protein translocation system, which is composed of SRP and FtsY. SRP is a ribonucleoprotein composed of Ffh and a 4.5S RNA molecule.

It is found in the cell inner membrane. The protein resides in the cytoplasm. It catalyses the reaction GTP + H2O = GDP + phosphate + H(+). Functionally, involved in targeting and insertion of nascent membrane proteins into the cytoplasmic membrane. Acts as a receptor for the complex formed by the signal recognition particle (SRP) and the ribosome-nascent chain (RNC). Interaction with SRP-RNC leads to the transfer of the RNC complex to the Sec translocase for insertion into the membrane, the hydrolysis of GTP by both Ffh and FtsY, and the dissociation of the SRP-FtsY complex into the individual components. The chain is Signal recognition particle receptor FtsY from Helicobacter pylori (strain J99 / ATCC 700824) (Campylobacter pylori J99).